A 96-amino-acid polypeptide reads, in one-letter code: Large ribosomal subunit protein uL23 (96 aa).

The protein belongs to the universal ribosomal protein uL23 family. As to quaternary structure, part of the 50S ribosomal subunit. Contacts protein L29, and trigger factor when it is bound to the ribosome.

In terms of biological role, one of the early assembly proteins it binds 23S rRNA. One of the proteins that surrounds the polypeptide exit tunnel on the outside of the ribosome. Forms the main docking site for trigger factor binding to the ribosome. The protein is Large ribosomal subunit protein uL23 of Aster yellows witches'-broom phytoplasma (strain AYWB).